Consider the following 655-residue polypeptide: 1-deoxy-D-xylulose-5-phosphate synthase (655 aa).

Residues His73 and 114-116 (SHA) each bind thiamine diphosphate. Asp145 contacts Mg(2+). Thiamine diphosphate contacts are provided by residues 146-147 (GA), Asn174, Tyr285, and Glu367. Asn174 lines the Mg(2+) pocket. The disordered stretch occupies residues 626–655 (RQPAIEDDPTSPGEAAPAGERAGEAIGDQR). Over residues 646-655 (RAGEAIGDQR) the composition is skewed to basic and acidic residues.

The protein belongs to the transketolase family. DXPS subfamily. As to quaternary structure, homodimer. It depends on Mg(2+) as a cofactor. Thiamine diphosphate is required as a cofactor.

It carries out the reaction D-glyceraldehyde 3-phosphate + pyruvate + H(+) = 1-deoxy-D-xylulose 5-phosphate + CO2. The protein operates within metabolic intermediate biosynthesis; 1-deoxy-D-xylulose 5-phosphate biosynthesis; 1-deoxy-D-xylulose 5-phosphate from D-glyceraldehyde 3-phosphate and pyruvate: step 1/1. Functionally, catalyzes the acyloin condensation reaction between C atoms 2 and 3 of pyruvate and glyceraldehyde 3-phosphate to yield 1-deoxy-D-xylulose-5-phosphate (DXP). In Frankia casuarinae (strain DSM 45818 / CECT 9043 / HFP020203 / CcI3), this protein is 1-deoxy-D-xylulose-5-phosphate synthase.